Reading from the N-terminus, the 210-residue chain is Large ribosomal subunit protein uL3 (210 aa).

A disordered region spans residues 133-152 (ATHGNSLSHRVHGSTGQNQT). Q151 carries the N5-methylglutamine modification.

This sequence belongs to the universal ribosomal protein uL3 family. In terms of assembly, part of the 50S ribosomal subunit. Forms a cluster with proteins L14 and L19. Methylated by PrmB.

Its function is as follows. One of the primary rRNA binding proteins, it binds directly near the 3'-end of the 23S rRNA, where it nucleates assembly of the 50S subunit. This is Large ribosomal subunit protein uL3 from Francisella philomiragia subsp. philomiragia (strain ATCC 25017 / CCUG 19701 / FSC 153 / O#319-036).